The primary structure comprises 78 residues: Putative membrane protein insertion efficiency factor (78 aa).

This sequence belongs to the UPF0161 family.

The protein localises to the cell inner membrane. Its function is as follows. Could be involved in insertion of integral membrane proteins into the membrane. This Prochlorococcus marinus (strain MIT 9312) protein is Putative membrane protein insertion efficiency factor.